The chain runs to 432 residues: Methylenetetrahydrofolate--tRNA-(uracil-5-)-methyltransferase TrmFO (432 aa).

Gly7–Gly12 contacts FAD.

This sequence belongs to the MnmG family. TrmFO subfamily. It depends on FAD as a cofactor.

The protein resides in the cytoplasm. The catalysed reaction is uridine(54) in tRNA + (6R)-5,10-methylene-5,6,7,8-tetrahydrofolate + NADH + H(+) = 5-methyluridine(54) in tRNA + (6S)-5,6,7,8-tetrahydrofolate + NAD(+). The enzyme catalyses uridine(54) in tRNA + (6R)-5,10-methylene-5,6,7,8-tetrahydrofolate + NADPH + H(+) = 5-methyluridine(54) in tRNA + (6S)-5,6,7,8-tetrahydrofolate + NADP(+). Its function is as follows. Catalyzes the folate-dependent formation of 5-methyl-uridine at position 54 (M-5-U54) in all tRNAs. The chain is Methylenetetrahydrofolate--tRNA-(uracil-5-)-methyltransferase TrmFO from Anoxybacillus flavithermus (strain DSM 21510 / WK1).